A 671-amino-acid chain; its full sequence is Protein cereblon (671 aa).

Residues 1–11 (MDGEEAADIDE) show a composition bias toward acidic residues. Disordered stretches follow at residues 1–59 (MDGE…VDGD), 104–130 (LTGT…PAQP), and 150–187 (GHNV…DAEA). Composition is skewed to low complexity over residues 39–51 (QQQQ…SSGE) and 105–115 (TGTTTPTPTAP). Positions 162 to 173 (SISSRHSGSDMS) are enriched in polar residues. In terms of domain architecture, Lon N-terminal spans 309 to 537 (RMLIFMHQHI…IIGSTLKQES (229 aa)). A CULT domain is found at 536 to 645 (ESLFYCRYCN…LAGSSVRIGK (110 aa)). Zn(2+)-binding residues include Cys541, Cys544, Cys610, and Cys613.

The protein belongs to the CRBN family. In terms of assembly, likely a component of a DCX (DDB1-CUL4-X-box) protein ligase complex. May interact with pic/DDB1. Ubiquitinated.

It is found in the nucleus. It participates in protein modification; protein ubiquitination. Its function is as follows. Substrate recognition component of a DCX (DDB1-CUL4-X-box) E3 protein ligase complex that mediates the ubiquitination and subsequent proteasomal degradation of target proteins. Has an essential role in mediating growth by negatively regulating insulin signaling. It also has a role in maintaining presynaptic function in the neuromuscular junction synapses of third-instar larvae. This Drosophila grimshawi (Hawaiian fruit fly) protein is Protein cereblon.